Consider the following 136-residue polypeptide: 5-hydroxyisourate hydrolase (136 aa).

The first 20 residues, 1–20, serve as a signal peptide directing secretion; sequence MKRYILATVIASLVAAPAMA. The substrate site is built by histidine 31, arginine 69, and tyrosine 133.

The protein belongs to the transthyretin family. 5-hydroxyisourate hydrolase subfamily. Homotetramer.

It localises to the periplasm. It catalyses the reaction 5-hydroxyisourate + H2O = 5-hydroxy-2-oxo-4-ureido-2,5-dihydro-1H-imidazole-5-carboxylate + H(+). In terms of biological role, catalyzes the hydrolysis of 5-hydroxyisourate (HIU) to 2-oxo-4-hydroxy-4-carboxy-5-ureidoimidazoline (OHCU). The sequence is that of 5-hydroxyisourate hydrolase (hiuH) from Salmonella typhimurium (strain LT2 / SGSC1412 / ATCC 700720).